A 526-amino-acid chain; its full sequence is Phosphoenolpyruvate carboxykinase (ATP) (526 aa).

Arg-55, Tyr-190, and Lys-196 together coordinate substrate. ATP contacts are provided by residues Lys-196, His-215, and 231–239 (GLSGTGKTT). Mn(2+) contacts are provided by Lys-196 and His-215. Mn(2+) is bound at residue Asp-252. ATP contacts are provided by Glu-280, Arg-317, and Thr-442. Substrate is bound at residue Arg-317.

The protein belongs to the phosphoenolpyruvate carboxykinase (ATP) family. The cofactor is Mn(2+).

The protein resides in the cytoplasm. It catalyses the reaction oxaloacetate + ATP = phosphoenolpyruvate + ADP + CO2. It functions in the pathway carbohydrate biosynthesis; gluconeogenesis. Involved in the gluconeogenesis. Catalyzes the conversion of oxaloacetate (OAA) to phosphoenolpyruvate (PEP) through direct phosphoryl transfer between the nucleoside triphosphate and OAA. This Alkaliphilus oremlandii (strain OhILAs) (Clostridium oremlandii (strain OhILAs)) protein is Phosphoenolpyruvate carboxykinase (ATP).